Here is a 182-residue protein sequence, read N- to C-terminus: NADH-quinone oxidoreductase subunit C 2 (182 aa).

Residues 153-182 (YKDKLNPFGAEGPPPTQPDLATNDIPQGGR) are disordered.

It belongs to the complex I 30 kDa subunit family. In terms of assembly, NDH-1 is composed of 14 different subunits. Subunits NuoB, C, D, E, F, and G constitute the peripheral sector of the complex.

The protein localises to the cell inner membrane. The catalysed reaction is a quinone + NADH + 5 H(+)(in) = a quinol + NAD(+) + 4 H(+)(out). Its function is as follows. NDH-1 shuttles electrons from NADH, via FMN and iron-sulfur (Fe-S) centers, to quinones in the respiratory chain. The immediate electron acceptor for the enzyme in this species is believed to be ubiquinone. Couples the redox reaction to proton translocation (for every two electrons transferred, four hydrogen ions are translocated across the cytoplasmic membrane), and thus conserves the redox energy in a proton gradient. This Rhizobium meliloti (strain 1021) (Ensifer meliloti) protein is NADH-quinone oxidoreductase subunit C 2.